Here is a 1406-residue protein sequence, read N- to C-terminus: DNA topoisomerase 2 (1406 aa).

Residues Asn-69, Asn-98, 126-128 (SSN), and 139-146 (GRNGYGAK) contribute to the ATP site. The tract at residues 332-334 (KKK) is interaction with DNA. 363–365 (QTK) is an ATP binding site. A Toprim domain is found at 441 to 555 (CTLILTEGDS…GLLDIPGFLI (115 aa)). The Mg(2+) site is built by Glu-447, Asp-524, and Asp-526. The region spanning 690 to 1159 (IPSVLDGFKP…SAKDLWNNDL (470 aa)) is the Topo IIA-type catalytic domain. Tyr-780 functions as the O-(5'-phospho-DNA)-tyrosine intermediate in the catalytic mechanism. The interaction with DNA stretch occupies residues 963-972 (KLISPISLQN). Residues 1079-1089 (EDEDEDLEESE) show a composition bias toward acidic residues. Disordered regions lie at residues 1079–1106 (EDEDEDLEESEEATRKKDKDDESTVNGP), 1183–1215 (KTKGGKRKRKGGDDDDYDPSGKKKPARRIKKIK), 1230–1287 (KIKA…DESG), and 1303–1406 (DEDA…FNDE). Positions 1090–1100 (EATRKKDKDDE) are enriched in basic and acidic residues. Basic residues predominate over residues 1204 to 1214 (KKKPARRIKKI). Positions 1261–1274 (DVTSNASTPSTTIF) are enriched in polar residues. The segment covering 1326–1336 (AKKKAPPKRKA) has biased composition (basic residues). Composition is skewed to acidic residues over residues 1341-1359 (SSEDELSDANLSEQDDEEV) and 1381-1406 (EISDEEDFIDDDEDEEVDSDESFNDE).

This sequence belongs to the type II topoisomerase family. In terms of assembly, homodimer. Requires Mg(2+) as cofactor. The cofactor is Mn(2+). Ca(2+) is required as a cofactor.

Its subcellular location is the nucleus. It catalyses the reaction ATP-dependent breakage, passage and rejoining of double-stranded DNA.. Control of topological states of DNA by transient breakage and subsequent rejoining of DNA strands. Topoisomerase II makes double-strand breaks. The chain is DNA topoisomerase 2 (TOP2) from Candida glabrata (strain ATCC 2001 / BCRC 20586 / JCM 3761 / NBRC 0622 / NRRL Y-65 / CBS 138) (Yeast).